We begin with the raw amino-acid sequence, 235 residues long: MSNQLIYTGKAKDIYSTEDENVIKSVYKDQATMLNGARKETIKGKGVLNNQISSLIFEKLNASGVATHFIERISDTEQLNKKVTIIPLEVVLRNVTAGSFSKRFGVEEGLDLKTPIVEFYYKNDDLDDPFINDEHVKFLNIANDEQIAYIKDETRRINELLKDWFEQIGLRLIDFKLEFGFDKDGKIILADEFSPDNCRLWDAEGHHMDKDVFRRDLGSLTDVYEVVLEKLQGLK.

It belongs to the SAICAR synthetase family.

It catalyses the reaction 5-amino-1-(5-phospho-D-ribosyl)imidazole-4-carboxylate + L-aspartate + ATP = (2S)-2-[5-amino-1-(5-phospho-beta-D-ribosyl)imidazole-4-carboxamido]succinate + ADP + phosphate + 2 H(+). It functions in the pathway purine metabolism; IMP biosynthesis via de novo pathway; 5-amino-1-(5-phospho-D-ribosyl)imidazole-4-carboxamide from 5-amino-1-(5-phospho-D-ribosyl)imidazole-4-carboxylate: step 1/2. This Streptococcus thermophilus (strain ATCC BAA-491 / LMD-9) protein is Phosphoribosylaminoimidazole-succinocarboxamide synthase.